An 85-amino-acid polypeptide reads, in one-letter code: Large ribosomal subunit protein bL27 (85 aa).

The disordered stretch occupies residues 1–21; sequence MAHKKAAGSSRNGRDSESKRL.

It belongs to the bacterial ribosomal protein bL27 family.

The sequence is that of Large ribosomal subunit protein bL27 from Chromohalobacter salexigens (strain ATCC BAA-138 / DSM 3043 / CIP 106854 / NCIMB 13768 / 1H11).